Consider the following 342-residue polypeptide: MTGELWLTLVDTADIVGFSMTFCVNIVLLFLLKNRGKNLGTYKHLMAFFSVFSIFYAIIESILRPIMHIENATFFLISRKRFNYSTRLGKINSAFYCACFATSFVVSGVHFVYRFFASCKPHLLRSFNMPYLLLWPLGCSIPVMMWASVSYFLYPDTAFTEAAVTNVLNTHYHSIKKDNVSYIAYVYYQYDENGVRYVYLKNLLGCFVHYFVMSATFVVMFICGYLTWKTMRKHKTASDRTRQLQKQLFKALVLQTLIPTIFMYAPTGVMFIAPFFSINLNANANFIVFCSFLYPGLDPLILILIIRDFRQTVFKFFCLRKKNSVDESRSTTRANMSQVATH.

At 1–11 the chain is on the extracellular side; it reads MTGELWLTLVD. Residues 12 to 32 traverse the membrane as a helical segment; sequence TADIVGFSMTFCVNIVLLFLL. Residues 33–38 are Cytoplasmic-facing; that stretch reads KNRGKN. Residues 39–59 traverse the membrane as a helical segment; sequence LGTYKHLMAFFSVFSIFYAII. Topologically, residues 60-92 are extracellular; sequence ESILRPIMHIENATFFLISRKRFNYSTRLGKIN. N-linked (GlcNAc...) asparagine glycosylation is found at N71 and N83. A helical transmembrane segment spans residues 93–113; the sequence is SAFYCACFATSFVVSGVHFVY. The Cytoplasmic segment spans residues 114 to 131; the sequence is RFFASCKPHLLRSFNMPY. Residues 132 to 152 traverse the membrane as a helical segment; the sequence is LLLWPLGCSIPVMMWASVSYF. Residues 153 to 202 lie on the Extracellular side of the membrane; it reads LYPDTAFTEAAVTNVLNTHYHSIKKDNVSYIAYVYYQYDENGVRYVYLKN. N179 carries an N-linked (GlcNAc...) asparagine glycan. The helical transmembrane segment at 203–223 threads the bilayer; that stretch reads LLGCFVHYFVMSATFVVMFIC. Residues 224–257 are Cytoplasmic-facing; sequence GYLTWKTMRKHKTASDRTRQLQKQLFKALVLQTL. A helical membrane pass occupies residues 258–278; the sequence is IPTIFMYAPTGVMFIAPFFSI. At 279–285 the chain is on the extracellular side; that stretch reads NLNANAN. Residues 286-306 traverse the membrane as a helical segment; the sequence is FIVFCSFLYPGLDPLILILII. Topologically, residues 307-342 are cytoplasmic; the sequence is RDFRQTVFKFFCLRKKNSVDESRSTTRANMSQVATH.

The protein belongs to the nematode receptor-like protein str family. Interacts with odr-4.

Its subcellular location is the cell projection. The protein resides in the cilium membrane. An odorant receptor which affects chemotaxis to the volatile odorant diacetyl. Specifies AWA neuronal cell fate via the odr-7 pathway. In Caenorhabditis briggsae, this protein is Serpentine receptor class r-10.